The sequence spans 152 residues: Large ribosomal subunit protein bL9 (152 aa).

It belongs to the bacterial ribosomal protein bL9 family.

Binds to the 23S rRNA. This is Large ribosomal subunit protein bL9 from Synechococcus sp. (strain CC9902).